The sequence spans 1106 residues: Putative pre-mRNA-splicing factor ATP-dependent RNA helicase DHX16 (1106 aa).

Disordered stretches follow at residues 73 to 100 (KIQN…DKEK), 120 to 286 (DDIV…TKSR), and 366 to 394 (YIND…WEQN). Over residues 78–94 (TSSSSSSSSTSLSSSSS) the composition is skewed to low complexity. Basic residues predominate over residues 138 to 155 (KRKKKEKKKEKKDKKDKK). A compositionally biased stretch (basic and acidic residues) spans 156-167 (DKKSSTRKKSDN). The segment covering 189–201 (NNENNDNNNDNNN) has biased composition (low complexity). Positions 232–283 (REQREVKELSDRIKKRDEKSTKKKIVDDSETKESIERKNRLEQNEQLETERT) are enriched in basic and acidic residues. The Helicase ATP-binding domain occupies 477-640 (IDAVREYQVL…FDGAPTFNIP (164 aa)). Residue 490-497 (GETGSGKT) coordinates ATP. The DEAH box signature appears at 587–590 (DEAH). The region spanning 665–838 (TVLQIHITEP…NVVLLLKSMG (174 aa)) is the Helicase C-terminal domain.

This sequence belongs to the DEAD box helicase family. DEAH subfamily. DDX16/PRP8 sub-subfamily. Component of pre-catalytic spliceosome complexes.

It is found in the nucleus. Its subcellular location is the nucleoplasm. It catalyses the reaction ATP + H2O = ADP + phosphate + H(+). Required for pre-mRNA splicing as component of the spliceosome. Contributes to pre-mRNA splicing after spliceosome formation and prior to the first transesterification reaction. The polypeptide is Putative pre-mRNA-splicing factor ATP-dependent RNA helicase DHX16 (dhx16) (Dictyostelium discoideum (Social amoeba)).